Reading from the N-terminus, the 916-residue chain is Isoleucine--tRNA ligase (916 aa).

Positions 57–67 (PYANGNLHMGH) match the 'HIGH' region motif. Glu554 provides a ligand contact to L-isoleucyl-5'-AMP. The 'KMSKS' region motif lies at 595–599 (KMSKS). ATP is bound at residue Lys598. Zn(2+) contacts are provided by Cys885, Cys888, Cys905, and Cys908.

The protein belongs to the class-I aminoacyl-tRNA synthetase family. IleS type 1 subfamily. In terms of assembly, monomer. The cofactor is Zn(2+).

Its subcellular location is the cytoplasm. It carries out the reaction tRNA(Ile) + L-isoleucine + ATP = L-isoleucyl-tRNA(Ile) + AMP + diphosphate. In terms of biological role, catalyzes the attachment of isoleucine to tRNA(Ile). As IleRS can inadvertently accommodate and process structurally similar amino acids such as valine, to avoid such errors it has two additional distinct tRNA(Ile)-dependent editing activities. One activity is designated as 'pretransfer' editing and involves the hydrolysis of activated Val-AMP. The other activity is designated 'posttransfer' editing and involves deacylation of mischarged Val-tRNA(Ile). The sequence is that of Isoleucine--tRNA ligase from Staphylococcus haemolyticus (strain JCSC1435).